A 205-amino-acid chain; its full sequence is Outer-membrane lipoprotein LolB (205 aa).

The N-terminal stretch at 1-17 is a signal peptide; sequence MRLRLFLAASALALLSG. Residue Cys-18 is the site of N-palmitoyl cysteine attachment. Residue Cys-18 is the site of S-diacylglycerol cysteine attachment.

This sequence belongs to the LolB family. Monomer.

It is found in the cell outer membrane. Functionally, plays a critical role in the incorporation of lipoproteins in the outer membrane after they are released by the LolA protein. This chain is Outer-membrane lipoprotein LolB, found in Pseudomonas aeruginosa (strain LESB58).